Consider the following 75-residue polypeptide: Toxin-like peptide AaF1CA7 (75 aa).

Residues 1–22 (MMKLMLFSIIVILFSLIGSIHG) form the signal peptide. The LCN-type CS-alpha/beta domain maps to 25–75 (VPGNYPLDSSDDTYLCAPLGENPSCIQICRKHGVKYGYCYAFQCWCEYFGR). 3 cysteine pairs are disulfide-bonded: C40–C63, C49–C68, and C53–C70.

The protein belongs to the long (3 C-C) scorpion toxin superfamily. As to expression, expressed by the venom gland.

It localises to the secreted. Probable neurotoxin that inhibits ion channels. This chain is Toxin-like peptide AaF1CA7, found in Androctonus australis (Sahara scorpion).